The following is a 648-amino-acid chain: Replication restart protein PriA (648 aa).

A Helicase ATP-binding domain is found at 131–297; it reads TIFNESNKPT…KTHKYQLVTL (167 aa). 144–151 provides a ligand contact to ATP; the sequence is GVTGSGKT. Residues 240–243 carry the DEAH box motif; that stretch reads DEEH. 8 residues coordinate Zn(2+): C358, C361, C367, C370, C385, C388, C398, and C401. Residues 393–548 form the Helicase C-terminal domain; that stretch reads KIFSSCPECL…SFFTNELEIR (156 aa).

Belongs to the helicase family. PriA subfamily. In terms of assembly, component of the replication restart primosome. The cofactor is Zn(2+).

It carries out the reaction Couples ATP hydrolysis with the unwinding of duplex DNA by translocating in the 3'-5' direction.. The catalysed reaction is ATP + H2O = ADP + phosphate + H(+). In terms of biological role, initiates the restart of stalled replication forks, which reloads the replicative helicase on sites other than the origin of replication. Recognizes and binds to abandoned replication forks and remodels them to uncover a helicase loading site. Promotes assembly of the primosome at these replication forks. This chain is Replication restart protein PriA, found in Rickettsia typhi (strain ATCC VR-144 / Wilmington).